A 517-amino-acid polypeptide reads, in one-letter code: Putative transporter C543.05c (517 aa).

11 consecutive transmembrane segments (helical) span residues 68–88 (SFGV…FALL), 93–113 (LCIV…YDIM), 121–141 (FPFL…IAIA), 155–175 (CEIF…QVLC), 186–206 (FLSI…DTVG), 217–237 (ILLL…FQHI), 269–289 (IPVG…ILFY), 311–331 (GFHW…ILGI), 377–397 (SNFI…LLVL), 403–423 (CVLA…NGIT), and 449–471 (RVVW…ITQV).

It belongs to the anion exchanger (TC 2.A.31) family.

The protein localises to the vacuole membrane. The sequence is that of Putative transporter C543.05c from Schizosaccharomyces pombe (strain 972 / ATCC 24843) (Fission yeast).